Consider the following 413-residue polypeptide: MERAAILPSVNQNYLLCPSRAFSTRLHSSTRNLSPPSFASIKLQHSSSSVSSNGGISLTRCNAVSSNSSSTLVTELADIDWDTVGFGLKPADYMYVMKCNIDGEFSKGELQRFGNIEISPSAGVLNYGQGLFEGLKAYRKKDGNNILLFRPEENAKRMRNGAERMCMPAPTVEQFVEAVTETVLANKRWVPPPGKGSLYVRPLLMGTGAVLGLAPAPEYTFIIYVSPVGNYFKEGVAPINLIVENEFHRATPGGTGGVKTIGNYAAVLKAQSIAKAKGYSDVLYLDCIYKRYLEEVSSCNIFIVKDNVISTPEIKGTILPGITRKSMIDVARTQGFQVEERNVTVDELLEADEVFCTGTAVVVSPVGSVTYKGKRVSYGEGTFGTVSKQLYTVLTSLQMGLIEDNMKWTVNLS.

A chloroplast-targeting transit peptide spans 1-60; it reads MERAAILPSVNQNYLLCPSRAFSTRLHSSTRNLSPPSFASIKLQHSSSSVSSNGGISLTR. An N6-(pyridoxal phosphate)lysine modification is found at Lys259.

This sequence belongs to the class-IV pyridoxal-phosphate-dependent aminotransferase family. The cofactor is pyridoxal 5'-phosphate. Expressed in the phloem cells.

The protein resides in the plastid. It localises to the chloroplast. The enzyme catalyses L-leucine + 2-oxoglutarate = 4-methyl-2-oxopentanoate + L-glutamate. The catalysed reaction is L-isoleucine + 2-oxoglutarate = (S)-3-methyl-2-oxopentanoate + L-glutamate. It carries out the reaction L-valine + 2-oxoglutarate = 3-methyl-2-oxobutanoate + L-glutamate. It catalyses the reaction a 2-oxocarboxylate + L-methionine = 4-methylsulfanyl-2-oxobutanoate + an L-alpha-amino acid. It participates in amino-acid biosynthesis; L-isoleucine biosynthesis; L-isoleucine from 2-oxobutanoate: step 4/4. The protein operates within amino-acid biosynthesis; L-leucine biosynthesis; L-leucine from 3-methyl-2-oxobutanoate: step 4/4. Its pathway is amino-acid biosynthesis; L-valine biosynthesis; L-valine from pyruvate: step 4/4. Inhibited by Ser- or Thr-derived imine. Its function is as follows. Converts 2-oxo acids to branched-chain amino acids. Acts on leucine, isoleucine and valine. Also involved in methionine chain elongation cycle of aliphatic glucosinolate formation. Catalyzes the conversion of 5-methylthiopentyl-2-oxo and 6-methylthiohexyl-2-oxo acids to their respective Met derivatives, homomethionine and dihomo-methionine, respectively. This chain is Branched-chain-amino-acid aminotransferase 3, chloroplastic, found in Arabidopsis thaliana (Mouse-ear cress).